Consider the following 303-residue polypeptide: Probable cell division protein WhiA (303 aa).

The H-T-H motif DNA-binding region spans Ser-272 to Leu-303.

The protein belongs to the WhiA family.

Involved in cell division and chromosome segregation. The sequence is that of Probable cell division protein WhiA from Streptococcus pyogenes serotype M6 (strain ATCC BAA-946 / MGAS10394).